The chain runs to 377 residues: Nitric oxide reductase FlRd-NAD(+) reductase (377 aa).

Belongs to the FAD-dependent oxidoreductase family. It depends on FAD as a cofactor.

The protein localises to the cytoplasm. It carries out the reaction 2 reduced [nitric oxide reductase rubredoxin domain] + NAD(+) + H(+) = 2 oxidized [nitric oxide reductase rubredoxin domain] + NADH. It functions in the pathway nitrogen metabolism; nitric oxide reduction. In terms of biological role, one of at least two accessory proteins for anaerobic nitric oxide (NO) reductase. Reduces the rubredoxin moiety of NO reductase. This is Nitric oxide reductase FlRd-NAD(+) reductase from Shigella boydii serotype 18 (strain CDC 3083-94 / BS512).